Consider the following 95-residue polypeptide: Large ribosomal subunit protein bL31 (95 aa).

Residues 68-95 (AGLNNINKKPEKKKIQGKSEPRKSLNEL) are disordered. Residues 80 to 95 (KKIQGKSEPRKSLNEL) are compositionally biased toward basic and acidic residues.

Belongs to the bacterial ribosomal protein bL31 family. Type A subfamily. Part of the 50S ribosomal subunit.

Functionally, binds the 23S rRNA. The sequence is that of Large ribosomal subunit protein bL31 from Ureaplasma parvum serovar 3 (strain ATCC 700970).